A 151-amino-acid polypeptide reads, in one-letter code: Large ribosomal subunit protein bL9 (151 aa).

Belongs to the bacterial ribosomal protein bL9 family.

Functionally, binds to the 23S rRNA. The chain is Large ribosomal subunit protein bL9 from Prochlorococcus marinus (strain MIT 9312).